Here is a 128-residue protein sequence, read N- to C-terminus: NADH dehydrogenase [ubiquinone] 1 beta subcomplex subunit 6 (128 aa).

The residue at position 2 (threonine 2) is an N-acetylthreonine. Lysine 24 is modified (N6-acetyllysine). A helical membrane pass occupies residues serine 68–methionine 86.

This sequence belongs to the complex I NDUFB6 subunit family. As to quaternary structure, complex I is composed of 45 different subunits.

It localises to the mitochondrion inner membrane. Its function is as follows. Accessory subunit of the mitochondrial membrane respiratory chain NADH dehydrogenase (Complex I), that is believed not to be involved in catalysis. Complex I functions in the transfer of electrons from NADH to the respiratory chain. The immediate electron acceptor for the enzyme is believed to be ubiquinone. This Pongo abelii (Sumatran orangutan) protein is NADH dehydrogenase [ubiquinone] 1 beta subcomplex subunit 6 (NDUFB6).